The following is a 563-amino-acid chain: NADPH oxidase 1 (563 aa).

At 1-8 the chain is on the cytoplasmic side; that stretch reads MGNWLVNH. A helical membrane pass occupies residues 9 to 31; sequence WLSVLFLVSWLGLNIFLFVYVFL. Topologically, residues 32–44 are extracellular; sequence NYEKSDKYYYTRE. Residues 45 to 69 traverse the membrane as a helical segment; it reads ILGTALALARASALCLNFNSMVILI. One can recognise a Ferric oxidoreductase domain in the interval 54–282; that stretch reads RASALCLNFN…LAPIAFYIFE (229 aa). Residues 70-102 are Cytoplasmic-facing; that stretch reads PVCRNLLSFLRGTCSFCNHTLRKPLDHNLTFHK. Positions 101 and 115 each coordinate heme. Residues 103-123 form a helical membrane-spanning segment; the sequence is LVAYMICIFTAIHIIAHLFNF. Residues 124–167 lie on the Extracellular side of the membrane; sequence ERYSRSQQAMDGSLASVLSSLFHPEKEDSWLNPIQSPNVTVMYA. The N-linked (GlcNAc...) asparagine glycan is linked to asparagine 161. A helical transmembrane segment spans residues 168-188; that stretch reads AFTSIAGLTGVVATVALVLMV. Residues 189–206 lie on the Cytoplasmic side of the membrane; it reads TSAMEFIRRNYFELFWYT. The chain crosses the membrane as a helical span at residues 207–227; that stretch reads HHLFIIYIICLGIHGLGGIVR. Heme contacts are provided by histidine 208 and histidine 220. At 228-395 the chain is on the extracellular side; it reads GQTEESMSES…TVSEDVFQYE (168 aa). Asparagine 241 carries an N-linked (GlcNAc...) asparagine glycan. Residues 283-390 enclose the FAD-binding FR-type domain; it reads RILRFYRSRQ…DGPFGTVSED (108 aa). 337–343 serves as a coordination point for FAD; it reads HPFTLTS. A helical membrane pass occupies residues 396 to 416; it reads VAVLVGAGIGVTPFASFLKSI. An interaction with NOXO1 region spans residues 396-535; sequence VAVLVGAGIG…GVFLCGPPTL (140 aa). Residues 417–563 are Cytoplasmic-facing; the sequence is WYKFQRAHNK…VQFYFNKETF (147 aa). At threonine 429 the chain carries Phosphothreonine; by PKC/PRKCB.

NOX1, NOXA1, NOXO1, RAC1 and CYBA forms a functional multimeric complex supporting ROS production. Interacts with NOXO1. Interacts (via FAD-binding FR-type domain) with ARHGEF7 (via PH domain). The phosphorylated form at Thr-429 interacts with NOXA1 with greater affinity. FAD serves as cofactor. In terms of processing, phosphorylation at Thr-429 mediated by PKC/PRKBC positively regulates its interaction with NOXA1 and enzyme activity. Expressed in vascular smooth muscle cells.

It localises to the cell projection. The protein localises to the invadopodium membrane. Its subcellular location is the cell membrane. It catalyses the reaction NADPH + 2 O2 = 2 superoxide + NADP(+) + H(+). Its activity is regulated as follows. The oxidase activity is potentiated by NOXA1 and NOXO1. Functionally, NADPH oxidase that catalyzes the generation of superoxide from molecular oxygen utilizing NADPH as an electron donor. The chain is NADPH oxidase 1 (Nox1) from Rattus norvegicus (Rat).